The primary structure comprises 541 residues: Chloride channel CLIC-like protein 1 (541 aa).

Positions 1-18 (MLCSLLLCGCLLLITGYA) are cleaved as a signal peptide. At 19–184 (HDDDWIDPTD…EDYFGVDPYN (166 aa)) the chain is on the lumenal side. A helical membrane pass occupies residues 185–205 (VFMVLLCLLCIVALVATELWT). The Cytoplasmic segment spans residues 206–217 (YVRWHTQLKRVC). A helical membrane pass occupies residues 218-238 (IISFLVSLGWNWIYLYKVAFA). Topologically, residues 239-329 (QHQANVAKMA…GEFIKALMKE (91 aa)) are lumenal. Residues 330-350 (IPVLLQIPVLVILALAVLGFC) form a helical membrane-spanning segment. Residues 351–541 (YGAGQSVPML…GTDPVSSPCG (191 aa)) lie on the Cytoplasmic side of the membrane. Residues 362–381 (HFRGPEREPPRALEPDDRRR) form a disordered region. Positions 364-381 (RGPEREPPRALEPDDRRR) are enriched in basic and acidic residues. Ser434 and Ser438 each carry phosphoserine. Thr482 carries the phosphothreonine modification. At Ser504 the chain carries Phosphoserine. Over residues 511 to 522 (QLKTDSECRPHS) the composition is skewed to basic and acidic residues. The tract at residues 511–541 (QLKTDSECRPHSTEAAAAAARGTDPVSSPCG) is disordered.

The protein belongs to the chloride channel MCLC family. Homomultimers. Interacts with mitochondrial protein PIGBOS1 (via C-terminus); the interaction occurs at the mitochondria-associated endoplasmic reticulum (ER) membrane, a zone of contact between the ER and mitochondrial membranes, but does not appear to play a role in ER-mitochondria tethering and is not affected by ER stress. Interacts with CALR. In terms of tissue distribution, expressed in testis (spermatocytes), liver and lung (at protein level). Expressed in spleen, liver, testis, kidney, heart, brain and lung.

The protein localises to the endoplasmic reticulum membrane. The catalysed reaction is chloride(in) = chloride(out). The enzyme catalyses bromide(in) = bromide(out). It catalyses the reaction nitrate(in) = nitrate(out). It carries out the reaction fluoride(in) = fluoride(out). Its function is as follows. Anion-selective channel with Ca(2+)-dependent and voltage-independent gating. Permeable to small monovalent anions with selectivity for bromide &gt; chloride &gt; nitrate &gt; fluoride. Operates in the endoplasmic reticulum (ER) membrane where it mediates chloride efflux to compensate for the loss of positive charges from the ER lumen upon Ca(2+) release. Contributes to the maintenance of ER Ca(2+) pools and activation of unfolded protein response to prevent accumulation of misfolded proteins in the ER lumen. Particularly involved in ER homeostasis mechanisms underlying motor neurons and retinal photoreceptors survival. In Rattus norvegicus (Rat), this protein is Chloride channel CLIC-like protein 1.